The chain runs to 198 residues: Recombination protein RecR (198 aa).

The segment at 56–71 (CTECRDFSETKICAIC) adopts a C4-type zinc-finger fold. In terms of domain architecture, Toprim spans 79–174 (HQLCVVESPP…RPSRLAQGLP (96 aa)).

This sequence belongs to the RecR family.

In terms of biological role, may play a role in DNA repair. It seems to be involved in an RecBC-independent recombinational process of DNA repair. It may act with RecF and RecO. The protein is Recombination protein RecR of Xylella fastidiosa (strain Temecula1 / ATCC 700964).